The primary structure comprises 339 residues: Tetraacyldisaccharide 4'-kinase (339 aa).

Asn-58–Thr-65 is a binding site for ATP.

The protein belongs to the LpxK family.

The catalysed reaction is a lipid A disaccharide + ATP = a lipid IVA + ADP + H(+). It participates in glycolipid biosynthesis; lipid IV(A) biosynthesis; lipid IV(A) from (3R)-3-hydroxytetradecanoyl-[acyl-carrier-protein] and UDP-N-acetyl-alpha-D-glucosamine: step 6/6. Transfers the gamma-phosphate of ATP to the 4'-position of a tetraacyldisaccharide 1-phosphate intermediate (termed DS-1-P) to form tetraacyldisaccharide 1,4'-bis-phosphate (lipid IVA). The protein is Tetraacyldisaccharide 4'-kinase of Chromobacterium violaceum (strain ATCC 12472 / DSM 30191 / JCM 1249 / CCUG 213 / NBRC 12614 / NCIMB 9131 / NCTC 9757 / MK).